The following is a 569-amino-acid chain: F-box-like/WD repeat-containing protein TBL1X (569 aa).

The LisH domain maps to 55-87 (TSDEVNFLVYRYLQESGFSHSAFTFGIESHISQ). The F-box-like domain occupies 92–137 (GTLVPPAALISILQKGLQYVEAEISINEDGTVFDGRPIESLSLIDA). Lysine 153 carries the N6-acetyllysine modification. Residues 170-195 (TSASVSQQNPSKNREATVNGEENRAH) form a disordered region. The residue at position 175 (serine 175) is a Phosphoserine. WD repeat units lie at residues 222 to 261 (GHES…NGGS), 278 to 317 (PSNK…ASTL), 319 to 358 (QHKG…AKQQ), 361 to 401 (FHSA…KTFQ), 402 to 441 (GHTN…CIHD), 444 to 492 (AHNK…CTHT), 495 to 534 (KHQE…LVHS), and 536 to 568 (RGTG…LDLR). Lysine 332 is covalently cross-linked (Glycyl lysine isopeptide (Lys-Gly) (interchain with G-Cter in SUMO2)).

Belongs to the WD repeat EBI family. In terms of assembly, homotetramer; dimer of dimers. Component of the N-Cor repressor complex, at least composed of NCOR1, NCOR2, HDAC3, TBL1X, TBL1R, CORO2A and GPS2. Interacts with GPS2 (when sumoylated); leading to protect GPS2 against degradation by the proteasome. Component of a E3 ubiquitin ligase complex containing UBE2D1, SIAH1, CACYBP/SIP, SKP1, APC and TBL1X. Probably part of other corepressor complexes, that do not contain NCOR1 and NCOR2. Interacts with histones H2B, H3a and H4. Interacts with MECP2; recruits TBL1X to the heterochromatin foci. Interacts with USP44.

The protein localises to the nucleus. F-box-like protein involved in the recruitment of the ubiquitin/19S proteasome complex to nuclear receptor-regulated transcription units. Plays an essential role in transcription activation mediated by nuclear receptors. Probably acts as integral component of corepressor complexes that mediates the recruitment of the 19S proteasome complex, leading to the subsequent proteasomal degradation of transcription repressor complexes, thereby allowing cofactor exchange. The chain is F-box-like/WD repeat-containing protein TBL1X (TBL1X) from Macaca fascicularis (Crab-eating macaque).